A 635-amino-acid chain; its full sequence is MAKKSAENGIYSVSGDEKKGPLIAPGPDGAPAKGDGPAGLGAPGGCLAVPPRETWTRQMDFIMSCVGFAVGLGNVWRFPYLCYKNGGGVFLIPYVLIALVGGIPIFFLEISLGQFMKAGSINVWNICPLFKGLGYASMVIVFYCNTYYIMVLAWGFYYLVKSFTTTLPWATCGHTWNTPDCVEIFRHEDCANGSLANLTCDQLAERRSPVIEFWENKVLRLSGGLEVPGALNSEVTLCLLACWVLVYFCVWKGVKSTGKIVYFTATFPYVVLVVLLVRGVLLPGALDGIIYYLKPDWSKLRSPQVWIDAGTQIFFSYAIGLGALTALGSYNRFNNNCYKDAIILALINSGTSFFAGFVVFSILGFMATEQGVHISKVAESGPGLAFIAYPRAVTLMPVAPLWAALFFFMLLLLGLDSQFVGVEGFITGLLDLLPASYYFRFQREISVALCCALCFVIDLSMVQMAGMYVFQLFDYYSASGTTLLWQAFWECVAVAWVYGADRFMDDIACMIGYRPCPWMKWCWSFFTPLVCMGIFIFNIVYYKPLVYNKTYVYPWWGEAMGWAFALSSMLCVPLHLLGCLLRAKGTMAERWQHLTQPVWGLHHLEYRAQDADVRGLTTLTPVSESSKVVVVESVM.

The interval Met-1–Asp-35 is disordered. Residues Met-1–Asp-60 are Cytoplasmic-facing. The segment covering Pro-25–Asp-35 has biased composition (low complexity). A helical transmembrane segment spans residues Phe-61–Leu-81. At Cys-82–Gly-87 the chain is on the extracellular side. Residues Gly-88–Leu-108 traverse the membrane as a helical segment. Over Glu-109 to Met-138 the chain is Cytoplasmic. Residues Val-139–Leu-159 form a helical membrane-spanning segment. Over Val-160–Ala-230 the chain is Extracellular. N-linked (GlcNAc...) asparagine glycans are attached at residues Asn-192 and Asn-197. A helical membrane pass occupies residues Leu-231–Trp-251. Topologically, residues Lys-252–Tyr-269 are cytoplasmic. The chain crosses the membrane as a helical span at residues Val-270 to Ile-290. Residues Tyr-291–Gln-304 are Extracellular-facing. Residues Val-305–Thr-325 traverse the membrane as a helical segment. Over Ala-326–Ala-341 the chain is Cytoplasmic. A helical transmembrane segment spans residues Ile-342–Ile-362. The Extracellular portion of the chain corresponds to Leu-363–Thr-394. Residues Leu-395 to Leu-415 form a helical membrane-spanning segment. Residues Asp-416–Glu-444 are Cytoplasmic-facing. A helical transmembrane segment spans residues Ile-445–Ala-465. Residues Gly-466 to Ser-479 lie on the Extracellular side of the membrane. The chain crosses the membrane as a helical span at residues Gly-480 to Ala-500. Over Asp-501–Lys-520 the chain is Cytoplasmic. The helical transmembrane segment at Trp-521–Tyr-541 threads the bilayer. Topologically, residues Tyr-542–Met-560 are extracellular. A glycan (N-linked (GlcNAc...) asparagine) is linked at Asn-548. The chain crosses the membrane as a helical span at residues Gly-561–Leu-581. The Cytoplasmic portion of the chain corresponds to Arg-582–Met-635. Phosphothreonine is present on residues Thr-617 and Thr-620. The residue at position 623 (Ser-623) is a Phosphoserine.

Belongs to the sodium:neurotransmitter symporter (SNF) (TC 2.A.22) family. SLC6A8 subfamily. In terms of processing, glycosylated. Prominent in kidney, heart, and muscle, also present in brain, but not in liver and intestine.

The protein resides in the cell membrane. The protein localises to the apical cell membrane. The catalysed reaction is creatine(out) + chloride(out) + 2 Na(+)(out) = creatine(in) + chloride(in) + 2 Na(+)(in). Functionally, creatine:sodium symporter which mediates the uptake of creatine. Plays an important role in supplying creatine to the brain via the blood-brain barrier. This Oryctolagus cuniculus (Rabbit) protein is Sodium- and chloride-dependent creatine transporter 1 (SLC6A8).